We begin with the raw amino-acid sequence, 98 residues long: NADH-ubiquinone oxidoreductase chain 4L (98 aa).

The next 3 helical transmembrane spans lie at Met1 to Met21, Ser29 to Leu49, and Ile61 to Val81.

This sequence belongs to the complex I subunit 4L family. As to quaternary structure, core subunit of respiratory chain NADH dehydrogenase (Complex I) which is composed of 45 different subunits.

The protein localises to the mitochondrion inner membrane. It catalyses the reaction a ubiquinone + NADH + 5 H(+)(in) = a ubiquinol + NAD(+) + 4 H(+)(out). Functionally, core subunit of the mitochondrial membrane respiratory chain NADH dehydrogenase (Complex I) which catalyzes electron transfer from NADH through the respiratory chain, using ubiquinone as an electron acceptor. Part of the enzyme membrane arm which is embedded in the lipid bilayer and involved in proton translocation. The polypeptide is NADH-ubiquinone oxidoreductase chain 4L (MT-ND4L) (Urotrichus talpoides (Japanese shrew mole)).